A 201-amino-acid chain; its full sequence is Superoxide dismutase [Mn] (201 aa).

Residues histidine 27, histidine 81, aspartate 163, and histidine 167 each coordinate Mn(2+).

It belongs to the iron/manganese superoxide dismutase family. In terms of assembly, homodimer. It depends on Mn(2+) as a cofactor.

It localises to the secreted. It catalyses the reaction 2 superoxide + 2 H(+) = H2O2 + O2. Destroys superoxide anion radicals which are normally produced within the cells and which are toxic to biological systems. In Streptococcus pyogenes, this protein is Superoxide dismutase [Mn] (sodA).